A 111-amino-acid chain; its full sequence is Disintegrin Eo1 subunit 1 (111 aa).

The first 20 residues, 1–20 (MIQVLLVIICLAVFPYQGSS), serve as a signal peptide directing secretion. Positions 21–46 (IILESGNVNDFELVYPKKVTVLPTGA) are excised as a propeptide. In terms of domain architecture, Disintegrin spans 26-111 (GNVNDFELVY…SDCPRNPWKD (86 aa)). 4 disulfide bridges follow: C53–C76, C67–C73, C72–C97, and C85–C104. The Cell attachment site; atypical (WGD) signature appears at 89 to 91 (WGD). A propeptide spanning residues 110 to 111 (KD) is cleaved from the precursor.

The protein belongs to the disintegrin family. Dimeric disintegrin subfamily. As to quaternary structure, heterodimer; disulfide-linked. As to expression, expressed by the venom gland.

The protein resides in the secreted. Its function is as follows. Poor inhibitor of platelet aggregation. The disintegrin inhibits the adhesion of cells expressing the RGD-dependent integrin alpha-5/beta-1 (ITGA5/ITGB1) to immobilized fibronectin. Inhibition on alpha-IIb/beta-3 (ITGA2B/ITGB3) is low. In Echis ocellatus (Ocellated saw-scaled viper), this protein is Disintegrin Eo1 subunit 1.